The chain runs to 86 residues: Small ribosomal subunit protein bS16 (86 aa).

The protein belongs to the bacterial ribosomal protein bS16 family.

This Stenotrophomonas maltophilia (strain K279a) protein is Small ribosomal subunit protein bS16.